The following is an 864-amino-acid chain: Receptor like protein 24 (864 aa).

The first 29 residues, 1 to 29 (MKTVFKSLLLLHFLLLLLLCFVSPSSFFL), serve as a signal peptide directing secretion. The Extracellular segment spans residues 30 to 830 (LKVPVGGLVA…EEKGEVINWK (801 aa)). N-linked (GlcNAc...) asparagine glycosylation is found at N61, N73, N94, and N112. LRR repeat units follow at residues 100–125 (FHQL…FCNL), 127–148 (KLKL…DLMG), 156–182 (LGKL…LFEL), 183–205 (HSLR…KFGN), 207–229 (NKLE…TISN), 230–253 (LTRI…VQNL), 254–277 (TKLS…LFTF), 279–303 (SLST…STSS), 305–326 (LEIM…ISKL), 327–350 (INLK…LLSP), 351–376 (LKSL…SYIP), 378–398 (SMES…ILKH), 399–423 (LQNL…LWTL), 425–448 (QLSF…VFVN), and 449–472 (LSVR…PLSI). N176, N194, N229, and N252 each carry an N-linked (GlcNAc...) asparagine glycan. N-linked (GlcNAc...) asparagine glycosylation is present at N298. The N-linked (GlcNAc...) asparagine glycan is linked to N338. 2 N-linked (GlcNAc...) asparagine glycosylation sites follow: N433 and N448. An LRR 16; degenerate repeat occupies 473–492 (IGFSAIHNSFTGEIPLSICN). N492 and N505 each carry an N-linked (GlcNAc...) asparagine glycan. 10 LRR repeats span residues 493 to 514 (RTSL…PQCL), 515 to 538 (SNFM…FYTD), 539 to 562 (SSLK…LLNC), 564 to 585 (SLRF…WLKA), 586 to 610 (LPNL…HQGP), 613 to 637 (FPEL…FFVN), 688 to 712 (LTSY…IGLL), 713 to 735 (KALI…SFAN), 736 to 760 (LMNL…LGSL), and 762 to 785 (FLVY…QITG). An N-linked (GlcNAc...) asparagine glycan is attached at N561. N-linked (GlcNAc...) asparagine glycosylation is present at N719. The chain crosses the membrane as a helical span at residues 831-851 (AVAIGYAPGLLFGLAIAHLIA). The Cytoplasmic segment spans residues 852–864 (SYKPEWLVKIIGF).

This sequence belongs to the RLP family.

It is found in the cell membrane. This is Receptor like protein 24 from Arabidopsis thaliana (Mouse-ear cress).